A 381-amino-acid chain; its full sequence is Dual-specificity RNA methyltransferase RlmN (381 aa).

The Proton acceptor role is filled by Glu86. The Radical SAM core domain occupies 105–338 (RHARYTICVS…CTIRQSKGLD (234 aa)). The cysteines at positions 112 and 343 are disulfide-linked. Residues Cys119, Cys123, and Cys126 each contribute to the [4Fe-4S] cluster site. Residues 169 to 170 (GE), Ser201, 224 to 226 (SLH), and Asn300 contribute to the S-adenosyl-L-methionine site. Cys343 acts as the S-methylcysteine intermediate in catalysis. The tract at residues 351–381 (ENPKFRANVSGNSAAKTEEKPTNDKTNVSKK) is disordered.

Belongs to the radical SAM superfamily. RlmN family. [4Fe-4S] cluster serves as cofactor.

The protein localises to the cytoplasm. It catalyses the reaction adenosine(2503) in 23S rRNA + 2 reduced [2Fe-2S]-[ferredoxin] + 2 S-adenosyl-L-methionine = 2-methyladenosine(2503) in 23S rRNA + 5'-deoxyadenosine + L-methionine + 2 oxidized [2Fe-2S]-[ferredoxin] + S-adenosyl-L-homocysteine. It carries out the reaction adenosine(37) in tRNA + 2 reduced [2Fe-2S]-[ferredoxin] + 2 S-adenosyl-L-methionine = 2-methyladenosine(37) in tRNA + 5'-deoxyadenosine + L-methionine + 2 oxidized [2Fe-2S]-[ferredoxin] + S-adenosyl-L-homocysteine. In terms of biological role, specifically methylates position 2 of adenine 2503 in 23S rRNA and position 2 of adenine 37 in tRNAs. m2A2503 modification seems to play a crucial role in the proofreading step occurring at the peptidyl transferase center and thus would serve to optimize ribosomal fidelity. This Campylobacter concisus (strain 13826) protein is Dual-specificity RNA methyltransferase RlmN.